Here is a 156-residue protein sequence, read N- to C-terminus: ATP synthase subunit b (156 aa).

A helical membrane pass occupies residues 7-27; the sequence is LFVQAIVFAILVWFTMKFVWP.

Belongs to the ATPase B chain family. As to quaternary structure, F-type ATPases have 2 components, F(1) - the catalytic core - and F(0) - the membrane proton channel. F(1) has five subunits: alpha(3), beta(3), gamma(1), delta(1), epsilon(1). F(0) has three main subunits: a(1), b(2) and c(10-14). The alpha and beta chains form an alternating ring which encloses part of the gamma chain. F(1) is attached to F(0) by a central stalk formed by the gamma and epsilon chains, while a peripheral stalk is formed by the delta and b chains.

It is found in the cell inner membrane. Functionally, f(1)F(0) ATP synthase produces ATP from ADP in the presence of a proton or sodium gradient. F-type ATPases consist of two structural domains, F(1) containing the extramembraneous catalytic core and F(0) containing the membrane proton channel, linked together by a central stalk and a peripheral stalk. During catalysis, ATP synthesis in the catalytic domain of F(1) is coupled via a rotary mechanism of the central stalk subunits to proton translocation. Component of the F(0) channel, it forms part of the peripheral stalk, linking F(1) to F(0). This is ATP synthase subunit b from Polaromonas sp. (strain JS666 / ATCC BAA-500).